The chain runs to 248 residues: 3,4-dihydroxyphthalate decarboxylase (248 aa).

Catalysis depends on Glu90, which acts as the Proton donor/acceptor. Positions 90, 109, 111, and 177 each coordinate a divalent metal cation.

The protein belongs to the aldolase class II family. A divalent metal cation serves as cofactor.

It carries out the reaction 3,4-dihydroxyphthalate + H(+) = 3,4-dihydroxybenzoate + CO2. It participates in xenobiotic degradation; phthalate degradation. In terms of biological role, catalyzes the decarboxylation of 3,4-dihydroxyphthalate to protocatechuate (3,4-dihydroxybenzoate) during phthalate metabolism. In Arthrobacter keyseri, this protein is 3,4-dihydroxyphthalate decarboxylase.